The primary structure comprises 409 residues: Probable glutaryl-CoA dehydrogenase, mitochondrial (409 aa).

110–111 provides a ligand contact to substrate; the sequence is RS. FAD-binding positions include 149–152, Ser-158, and 184–186; these read FGLT and WIS. Ser-158 lines the substrate pocket. Residues 261-265 and Arg-268 contribute to the substrate site; that span reads FGCLN. Glu-388 acts as the Proton acceptor in catalysis. Thr-390 and Phe-408 together coordinate FAD.

Belongs to the acyl-CoA dehydrogenase family. FAD is required as a cofactor.

The protein resides in the mitochondrion matrix. It carries out the reaction glutaryl-CoA + oxidized [electron-transfer flavoprotein] + 2 H(+) = (2E)-butenoyl-CoA + reduced [electron-transfer flavoprotein] + CO2. The protein operates within amino-acid metabolism; lysine degradation. It participates in amino-acid metabolism; tryptophan metabolism. This chain is Probable glutaryl-CoA dehydrogenase, mitochondrial, found in Caenorhabditis elegans.